Consider the following 1278-residue polypeptide: Papilin (1278 aa).

A signal peptide spans 1–18; sequence MRLLLLVPLLLAPAPGSS. TSP type-1 domains follow at residues 26–80, 304–361, 362–421, 423–481, and 484–539; these read SDTW…ESCP, PGFS…HPCP, ETKR…ACNL, RCAA…EDCP, and SDQA…QPCH. Disulfide bonds link C38/C74, C42/C79, C53/C64, C316/C355, C320/C360, and C331/C343. A disordered region spans residues 544–632; that stretch reads VPSMQDVHTP…SGSGPHDCRH (89 aa). Basic and acidic residues predominate over residues 582–599; that stretch reads PSARGDHRGERGDPRGDQ. Low complexity predominate over residues 608–620; it reads PAPSLQQPPYQQP. 3 cysteine pairs are disulfide-bonded: C754-C804, C763-C787, and C779-C800. In terms of domain architecture, BPTI/Kunitz inhibitor spans 754–804; the sequence is CLLPSAHGSCADWAARWYFVASVGQCNRFWYGGCHGNANNFASEQECMSSC. A disordered region spans residues 805–901; sequence QGSLHGPRRP…GGDAGSPAPP (97 aa). 3 Ig-like C2-type domains span residues 900-995, 1033-1128, and 1133-1218; these read PPFH…LRII, PSSH…VQLR, and LTIS…TEVK. A disulfide bond links C931 and C978. The disordered stretch occupies residues 1014–1042; it reads RDPAQDFGQAGAAGPLGAIPSSHPQPANR. 2 cysteine pairs are disulfide-bonded: C1065–C1112 and C1154–C1202. The PLAC domain maps to 1231 to 1270; it reads PGRDCVDQPELANCDLILQAQLCGNEYYSSFCCASCSRFQ.

It belongs to the papilin family.

The protein localises to the secreted. This Homo sapiens (Human) protein is Papilin (PAPLN).